The sequence spans 108 residues: X antigen family member 5 (108 aa).

The tract at residues 20 to 108 (VGPMLEPSVP…PEGGEGKPQL (89 aa)) is disordered. 2 stretches are compositionally biased toward basic and acidic residues: residues 40 to 52 (SQDHTPGQKREDD) and 94 to 108 (EQFKMPEGGEGKPQL).

This sequence belongs to the GAGE family.

The chain is X antigen family member 5 (XAGE5) from Homo sapiens (Human).